Reading from the N-terminus, the 218-residue chain is MIIAIDGPSASGKSSIAKALGSRLGFKFISSGYFYRIITLIAQKFTLNEYDLLSESKILELVLQNDIKFNGVDFLLNGVNVTSHILNERIDLQVSLYSSYIGVRNIVNKKLREIVKLKDDNYIIEGRDITTVVFPEAKVKIYLDASVKVRALRRYNQRDDDITLNELEQALERRDEIDQNKEYGKLKLAKEVFYIDTSYKCLDDVCDIIIKTFNLKKK.

7-15 (GPSASGKSS) contributes to the ATP binding site.

This sequence belongs to the cytidylate kinase family. Type 1 subfamily.

It is found in the cytoplasm. It catalyses the reaction CMP + ATP = CDP + ADP. The enzyme catalyses dCMP + ATP = dCDP + ADP. The protein is Cytidylate kinase of Borrelia hermsii (strain HS1 / DAH).